We begin with the raw amino-acid sequence, 189 residues long: Isopentenyl-diphosphate Delta-isomerase (189 aa).

2 residues coordinate Mn(2+): His-27 and His-34. The 140-residue stretch at Pro-32 to Asp-171 folds into the Nudix hydrolase domain. Cys-69 is an active-site residue. A Mg(2+)-binding site is contributed by Cys-69. His-71 contributes to the Mn(2+) binding site. Glu-89 serves as a coordination point for Mg(2+). Mn(2+)-binding residues include Glu-119 and Glu-121. Residue Glu-121 is part of the active site.

Belongs to the IPP isomerase type 1 family. It depends on Mg(2+) as a cofactor. Requires Mn(2+) as cofactor.

Its subcellular location is the cytoplasm. The enzyme catalyses isopentenyl diphosphate = dimethylallyl diphosphate. It functions in the pathway isoprenoid biosynthesis; dimethylallyl diphosphate biosynthesis; dimethylallyl diphosphate from isopentenyl diphosphate: step 1/1. In terms of biological role, catalyzes the 1,3-allylic rearrangement of the homoallylic substrate isopentenyl (IPP) to its highly electrophilic allylic isomer, dimethylallyl diphosphate (DMAPP). In Corynebacterium glutamicum (strain ATCC 13032 / DSM 20300 / JCM 1318 / BCRC 11384 / CCUG 27702 / LMG 3730 / NBRC 12168 / NCIMB 10025 / NRRL B-2784 / 534), this protein is Isopentenyl-diphosphate Delta-isomerase.